Reading from the N-terminus, the 744-residue chain is CCR4-NOT transcription complex subunit 10 (744 aa).

A compositionally biased stretch (basic and acidic residues) spans 1 to 16; sequence MAADKPADQGAEKHEG. Residues 1–25 are disordered; the sequence is MAADKPADQGAEKHEGTGQSSGITD. A2 bears the N-acetylalanine mark. The stretch at 74 to 107 forms a coiled coil; sequence KSNQTTTDNLRQTLNQLKNQVHSAVEEMDGLDDV. Low complexity predominate over residues 183–199; that stretch reads NNNKNGKNETGNNNNKD. Disordered regions lie at residues 183–204, 477–521, and 602–634; these read NNNK…SNHK, QDPK…PPSS, and VSLG…PQCY. The span at 484-495 shows a compositional bias: polar residues; the sequence is GAKNSNQLGGNT. Positions 496–506 are enriched in low complexity; the sequence is ESSESSETCSS. Residues 602–612 show a composition bias toward polar residues; sequence VSLGISSNEQD.

This sequence belongs to the CNOT10 family. As to quaternary structure, component of the CCR4-NOT complex; distinct complexes seem to exist that differ in the participation of probably mutually exclusive catalytic subunits. CNOT10 and CNOT11 form a subcomplex docked to the CNOT1 scaffold.

It is found in the cytoplasm. The protein localises to the nucleus. Component of the CCR4-NOT complex which is one of the major cellular mRNA deadenylases and is linked to various cellular processes including bulk mRNA degradation, miRNA-mediated repression, translational repression during translational initiation and general transcription regulation. Additional complex functions may be a consequence of its influence on mRNA expression. Is not required for association of CNOT7 to the CCR4-NOT complex. This chain is CCR4-NOT transcription complex subunit 10 (CNOT10), found in Homo sapiens (Human).